The primary structure comprises 90 residues: Molybdopterin synthase sulfur carrier subunit (90 aa).

G90 carries the 1-thioglycine; alternate modification. A Glycyl adenylate; alternate modification is found at G90.

The protein belongs to the MoaD family. MOCS2A subfamily. As to quaternary structure, heterotetramer; composed of 2 small (Mocs2A) and 2 large (Mocs2B) subunits. In terms of processing, C-terminal thiocarboxylation occurs in 2 steps, it is first acyl-adenylated (-COAMP) via the hesA/moeB/thiF part of MOCS3, then thiocarboxylated (-COSH) via the rhodanese domain of MOCS3.

It is found in the cytoplasm. It functions in the pathway cofactor biosynthesis; molybdopterin biosynthesis. Functionally, acts as a sulfur carrier required for molybdopterin biosynthesis. Component of the molybdopterin synthase complex that catalyzes the conversion of precursor Z into molybdopterin by mediating the incorporation of 2 sulfur atoms into precursor Z to generate a dithiolene group. In the complex, serves as sulfur donor by being thiocarboxylated (-COSH) at its C-terminus by MOCS3. After interaction with Mocs2B, the sulfur is then transferred to precursor Z to form molybdopterin. Involved during biosynthesis of the molybdenum cofactor. This Drosophila melanogaster (Fruit fly) protein is Molybdopterin synthase sulfur carrier subunit.